We begin with the raw amino-acid sequence, 561 residues long: Urocanate hydratase (561 aa).

NAD(+) is bound by residues 52–53, Gln130, 176–178, Glu196, Arg201, 242–243, 263–267, 273–274, and Tyr322; these read GG, GMG, NA, QTSAH, and YL. Cys410 is an active-site residue. Gly492 contributes to the NAD(+) binding site.

The protein belongs to the urocanase family. NAD(+) is required as a cofactor.

The protein localises to the cytoplasm. It carries out the reaction 4-imidazolone-5-propanoate = trans-urocanate + H2O. The protein operates within amino-acid degradation; L-histidine degradation into L-glutamate; N-formimidoyl-L-glutamate from L-histidine: step 2/3. Catalyzes the conversion of urocanate to 4-imidazolone-5-propionate. The protein is Urocanate hydratase of Salmonella agona (strain SL483).